We begin with the raw amino-acid sequence, 144 residues long: uncharacterized protein (144 aa).

Positions 90 to 144 (KKEYSALKKSGKIHKVGGSKSSGHRKTKKPKKSMKGGSKTKKLSEKQLMKELLAM) are disordered. Over residues 98 to 130 (KSGKIHKVGGSKSSGHRKTKKPKKSMKGGSKTK) the composition is skewed to basic residues.

This is an uncharacterized protein from Sputnik virophage.